The chain runs to 107 residues: FK506-binding protein 1 (107 aa).

Positions 19 to 107 (GSNVTVHHAG…VFEVELITFK (89 aa)) constitute a PPIase FKBP-type domain.

This sequence belongs to the FKBP-type PPIase family.

The enzyme catalyses [protein]-peptidylproline (omega=180) = [protein]-peptidylproline (omega=0). Its activity is regulated as follows. Inhibited by both FK506 and rapamycin. In terms of biological role, PPIases accelerate the folding of proteins by catalyzing the cis-trans isomerization of proline imidic peptide bonds in oligopeptides. The polypeptide is FK506-binding protein 1 (fkbp1) (Dictyostelium discoideum (Social amoeba)).